The sequence spans 323 residues: Acetylglutamate kinase (323 aa).

Substrate is bound by residues Gly-90–Gly-91, Arg-112, and Asn-218.

This sequence belongs to the acetylglutamate kinase family. ArgB subfamily.

It localises to the cytoplasm. It carries out the reaction N-acetyl-L-glutamate + ATP = N-acetyl-L-glutamyl 5-phosphate + ADP. Its pathway is amino-acid biosynthesis; L-arginine biosynthesis; N(2)-acetyl-L-ornithine from L-glutamate: step 2/4. Catalyzes the ATP-dependent phosphorylation of N-acetyl-L-glutamate. This is Acetylglutamate kinase from Ehrlichia canis (strain Jake).